Reading from the N-terminus, the 332-residue chain is 2,3-diketo-L-gulonate reductase (332 aa).

His44 acts as the Proton donor in catalysis. Residues 168-174, 224-225, and 304-306 contribute to the NAD(+) site; these read ITMVDMS, WK, and GHE.

It belongs to the LDH2/MDH2 oxidoreductase family. DlgD subfamily. In terms of assembly, homodimer.

Its subcellular location is the cytoplasm. It catalyses the reaction 3-dehydro-L-gulonate + NAD(+) = 2,3-dioxo-L-gulonate + NADH + H(+). The enzyme catalyses 3-dehydro-L-gulonate + NADP(+) = 2,3-dioxo-L-gulonate + NADPH + H(+). Functionally, catalyzes the reduction of 2,3-diketo-L-gulonate in the presence of NADH, to form 3-keto-L-gulonate. In Salmonella agona (strain SL483), this protein is 2,3-diketo-L-gulonate reductase.